Reading from the N-terminus, the 1013-residue chain is EF-hand calcium-binding domain-containing protein 6 (1013 aa).

EF-hand domains lie at 20–55, 145–180, 251–286, 287–322, and 352–387; these read KNIK…FCLK, KSYE…FIYQ, DRSA…VAIK, LSDS…NCRM, and RNLQ…FCPF. The segment at 441–460 is disordered; the sequence is QKDEQQQPDLSERTKPTEDK. EF-hand domains follow at residues 482–517, 589–624, 695–730, 731–766, 812–847, and 917–952; these read QQDP…TGMP, ESFR…LLLN, NRWS…FDIP, LTPR…NYSP, DLHQ…CGCS, and SSQL…FCYK. 4 residues coordinate Ca(2+): D602, D604, D606, and D613. Phosphothreonine is present on T732.

In terms of assembly, microtubule inner protein component of sperm flagellar doublet microtubules. Binds PARK7. Part of a ternary complex containing PARK7, EFCAB6/DJBP and AR.

It localises to the nucleus. The protein localises to the cytoplasm. It is found in the cytoskeleton. Its subcellular location is the flagellum axoneme. Its function is as follows. Negatively regulates the androgen receptor by recruiting histone deacetylase complex, and protein DJ-1 antagonizes this inhibition by abrogation of this complex. Microtubule inner protein (MIP) part of the dynein-decorated doublet microtubules (DMTs) in cilia axoneme, which is required for motile cilia beating. The chain is EF-hand calcium-binding domain-containing protein 6 (EFCAB6) from Pongo abelii (Sumatran orangutan).